Consider the following 464-residue polypeptide: Formin-like protein 19 (464 aa).

The interval 1–74 (MSLVDISGAY…PRPCSRPPKT (74 aa)) is disordered. Residues 14-70 (PLPPPPPPLMRRRAPLPPPPPPPLMRRRAPPPPPPPLMRRRAPPPPPPPPLPRPCSR) are compositionally biased toward pro residues. Residues 68 to 462 (CSRPPKTKCS…KAAKEAEMEK (395 aa)) form the FH2 domain.

It belongs to the formin-like family. Class-II subfamily.

The sequence is that of Formin-like protein 19 (FH19) from Arabidopsis thaliana (Mouse-ear cress).